The following is a 170-amino-acid chain: Small ribosomal subunit protein bS18c (170 aa).

2 disordered regions span residues 1-59 (MYIS…IGPG) and 151-170 (NLRNSNQNLRNNNRNLSSDC). Repeats lie at residues 4–10 (SKQPFRK), 11–17 (SKQPFRK), 18–24 (SKQTFHK), 25–31 (SKQPFRK), 32–38 (FKQPFRK), 39–45 (SKQPFRK), and 46–52 (SKQPFRR). Residues 4 to 52 (SKQPFRKSKQPFRKSKQTFHKSKQPFRKFKQPFRKSKQPFRKSKQPFRR) form a 7 X 7 AA tandem repeats region. Residues 7–55 (PFRKSKQPFRKSKQTFHKSKQPFRKFKQPFRKSKQPFRKSKQPFRRRSR) show a composition bias toward basic residues.

Belongs to the bacterial ribosomal protein bS18 family. In terms of assembly, part of the 30S ribosomal subunit.

The protein resides in the plastid. The protein localises to the chloroplast. In Zea mays (Maize), this protein is Small ribosomal subunit protein bS18c (rps18).